The primary structure comprises 286 residues: 4-hydroxy-3-methylbut-2-enyl diphosphate reductase (286 aa).

Cysteine 12 contributes to the [4Fe-4S] cluster binding site. Histidine 46 and histidine 79 together coordinate (2E)-4-hydroxy-3-methylbut-2-enyl diphosphate. The dimethylallyl diphosphate site is built by histidine 46 and histidine 79. The isopentenyl diphosphate site is built by histidine 46 and histidine 79. Cysteine 101 serves as a coordination point for [4Fe-4S] cluster. Histidine 129 is a binding site for (2E)-4-hydroxy-3-methylbut-2-enyl diphosphate. Residue histidine 129 participates in dimethylallyl diphosphate binding. Histidine 129 serves as a coordination point for isopentenyl diphosphate. Glutamate 131 serves as the catalytic Proton donor. Threonine 169 is a binding site for (2E)-4-hydroxy-3-methylbut-2-enyl diphosphate. Residue cysteine 198 participates in [4Fe-4S] cluster binding. (2E)-4-hydroxy-3-methylbut-2-enyl diphosphate contacts are provided by serine 226, asparagine 228, and serine 270. Residues serine 226, asparagine 228, and serine 270 each coordinate dimethylallyl diphosphate. The isopentenyl diphosphate site is built by serine 226, asparagine 228, and serine 270.

The protein belongs to the IspH family. The cofactor is [4Fe-4S] cluster.

It catalyses the reaction isopentenyl diphosphate + 2 oxidized [2Fe-2S]-[ferredoxin] + H2O = (2E)-4-hydroxy-3-methylbut-2-enyl diphosphate + 2 reduced [2Fe-2S]-[ferredoxin] + 2 H(+). The catalysed reaction is dimethylallyl diphosphate + 2 oxidized [2Fe-2S]-[ferredoxin] + H2O = (2E)-4-hydroxy-3-methylbut-2-enyl diphosphate + 2 reduced [2Fe-2S]-[ferredoxin] + 2 H(+). The protein operates within isoprenoid biosynthesis; dimethylallyl diphosphate biosynthesis; dimethylallyl diphosphate from (2E)-4-hydroxy-3-methylbutenyl diphosphate: step 1/1. It participates in isoprenoid biosynthesis; isopentenyl diphosphate biosynthesis via DXP pathway; isopentenyl diphosphate from 1-deoxy-D-xylulose 5-phosphate: step 6/6. Catalyzes the conversion of 1-hydroxy-2-methyl-2-(E)-butenyl 4-diphosphate (HMBPP) into a mixture of isopentenyl diphosphate (IPP) and dimethylallyl diphosphate (DMAPP). Acts in the terminal step of the DOXP/MEP pathway for isoprenoid precursor biosynthesis. This is 4-hydroxy-3-methylbut-2-enyl diphosphate reductase from Solidesulfovibrio magneticus (strain ATCC 700980 / DSM 13731 / RS-1) (Desulfovibrio magneticus).